The following is a 199-amino-acid chain: Urease accessory protein UreG (199 aa).

8 to 15 provides a ligand contact to GTP; it reads GPVGSGKT.

The protein belongs to the SIMIBI class G3E GTPase family. UreG subfamily. Homodimer. UreH, UreF and UreG form a complex that acts as a GTP-hydrolysis-dependent molecular chaperone, activating the urease apoprotein by helping to assemble the nickel containing metallocenter of UreC. The UreE protein probably delivers the nickel.

It is found in the cytoplasm. Its function is as follows. Facilitates the functional incorporation of the urease nickel metallocenter. This process requires GTP hydrolysis, probably effectuated by UreG. This is Urease accessory protein UreG from Helicobacter pylori (strain P12).